Reading from the N-terminus, the 148-residue chain is Large ribosomal subunit protein bL9 (148 aa).

The protein belongs to the bacterial ribosomal protein bL9 family.

Functionally, binds to the 23S rRNA. In Streptomyces avermitilis (strain ATCC 31267 / DSM 46492 / JCM 5070 / NBRC 14893 / NCIMB 12804 / NRRL 8165 / MA-4680), this protein is Large ribosomal subunit protein bL9.